A 446-amino-acid polypeptide reads, in one-letter code: Glutamate--tRNA ligase 2 (446 aa).

Positions 8-18 (PSPTGYLHIGN) match the 'HIGH' region motif. The 'KMSKS' region signature appears at 239–243 (GLSKR). An ATP-binding site is contributed by Lys242.

Belongs to the class-I aminoacyl-tRNA synthetase family. Glutamate--tRNA ligase type 1 subfamily. Monomer.

Its subcellular location is the cytoplasm. It carries out the reaction tRNA(Glu) + L-glutamate + ATP = L-glutamyl-tRNA(Glu) + AMP + diphosphate. Its function is as follows. Catalyzes the attachment of glutamate to tRNA(Glu) in a two-step reaction: glutamate is first activated by ATP to form Glu-AMP and then transferred to the acceptor end of tRNA(Glu). The polypeptide is Glutamate--tRNA ligase 2 (Methylobacterium radiotolerans (strain ATCC 27329 / DSM 1819 / JCM 2831 / NBRC 15690 / NCIMB 10815 / 0-1)).